We begin with the raw amino-acid sequence, 41 residues long: Photosystem I reaction center subunit IX (41 aa).

A helical membrane pass occupies residues 7 to 27 (YLSTVPVVFAIWLTFTAGLII).

It belongs to the PsaJ family.

It is found in the plastid. It localises to the chloroplast thylakoid membrane. In terms of biological role, may help in the organization of the PsaE and PsaF subunits. In Bigelowiella natans (Pedinomonas minutissima), this protein is Photosystem I reaction center subunit IX.